We begin with the raw amino-acid sequence, 588 residues long: Pre-mRNA-splicing ATP-dependent RNA helicase PRP28 (588 aa).

Residues 15 to 94 are disordered; it reads NKKKGLDENT…PSKQNGSKFH (80 aa). Composition is skewed to basic and acidic residues over residues 35–49 and 60–83; these read NKQE…KENE and AKVE…DKKR. Ser69 is modified (phosphoserine). The Q motif motif lies at 172–202; the sequence is RNWEELNIIPRDLLRVIIQELRFPSPTPIQR. The Helicase ATP-binding domain occupies 208-399; that stretch reads VCNMKQYRDF…AGYMQKPVYA (192 aa). 221-228 provides a ligand contact to ATP; sequence ASTGSGKT. The DEAD box motif lies at 341–344; sequence DEAD. Residues 427–579 enclose the Helicase C-terminal domain; it reads KLKPIVAKYD…EAVKNKYNVG (153 aa).

This sequence belongs to the DEAD box helicase family. DDX23/PRP28 subfamily. In terms of assembly, component of the U5 snRNP complex, composed of at least BRR2, PRP8, PRP28, DIB1, LIN1, SMB1, SMD1, SMD2, SMD3, SME1, SMX2, SMX3, and SNU114, associated with the U5 snRNA.

It is found in the cytoplasm. Its subcellular location is the nucleus. It catalyses the reaction ATP + H2O = ADP + phosphate + H(+). In terms of biological role, ATP-dependent RNA helicase involved in mRNA splicing. May destabilize the U1/5'-splice site duplex to permit an effective competition for the 5'-splice site by the U6 snRNA, resulting in the switch between U1 and U6 at the 5'-splice site. May also act to unwind the U4/U6 base-pairing interaction in the U4/U6/U5 snRNP, facilitating the first covalent step of splicing. This is Pre-mRNA-splicing ATP-dependent RNA helicase PRP28 (PRP28) from Saccharomyces cerevisiae (strain ATCC 204508 / S288c) (Baker's yeast).